Reading from the N-terminus, the 1064-residue chain is Isoleucine--tRNA ligase, cytoplasmic (1064 aa).

A 'HIGH' region motif is present at residues Pro42–His52. A 'KMSKS' region motif is present at residues Lys597–Arg601. Lys600 provides a ligand contact to ATP.

It belongs to the class-I aminoacyl-tRNA synthetase family.

It localises to the cytoplasm. It carries out the reaction tRNA(Ile) + L-isoleucine + ATP = L-isoleucyl-tRNA(Ile) + AMP + diphosphate. The polypeptide is Isoleucine--tRNA ligase, cytoplasmic (irs1) (Schizosaccharomyces pombe (strain 972 / ATCC 24843) (Fission yeast)).